The sequence spans 283 residues: Pantothenate synthetase (283 aa).

30 to 37 (MGNLHDGH) lines the ATP pocket. His37 acts as the Proton donor in catalysis. Residue Gln61 participates in (R)-pantoate binding. Gln61 serves as a coordination point for beta-alanine. 149-152 (GEKD) is a binding site for ATP. Gln155 lines the (R)-pantoate pocket. An ATP-binding site is contributed by 186–189 (LSSR).

The protein belongs to the pantothenate synthetase family. As to quaternary structure, homodimer.

It is found in the cytoplasm. It carries out the reaction (R)-pantoate + beta-alanine + ATP = (R)-pantothenate + AMP + diphosphate + H(+). It participates in cofactor biosynthesis; (R)-pantothenate biosynthesis; (R)-pantothenate from (R)-pantoate and beta-alanine: step 1/1. In terms of biological role, catalyzes the condensation of pantoate with beta-alanine in an ATP-dependent reaction via a pantoyl-adenylate intermediate. In Escherichia coli O17:K52:H18 (strain UMN026 / ExPEC), this protein is Pantothenate synthetase.